The following is a 439-amino-acid chain: Exosome complex component RRP45 (439 aa).

An ARE binding region spans residues 1-268 (MKETPLSNCE…AEITELILKA (268 aa)). Phosphoserine is present on Ser65. Lys297 carries the N6-acetyllysine; alternate modification. Lys297 participates in a covalent cross-link: Glycyl lysine isopeptide (Lys-Gly) (interchain with G-Cter in SUMO1); alternate. Lys297 participates in a covalent cross-link: Glycyl lysine isopeptide (Lys-Gly) (interchain with G-Cter in SUMO2); alternate. Ser306, Val325, Ser327, and Ser346 each carry phosphoserine. 2 disordered regions span residues 335–363 (GTAQ…GGGD) and 391–439 (LSDS…RAAN). Positions 349–361 (DLEDSEKEDDEGG) are enriched in acidic residues. Ser392, Ser394, Lys409, and Ile411 each carry phosphoserine. A Glycyl lysine isopeptide (Lys-Gly) (interchain with G-Cter in SUMO2) cross-link involves residue Lys419. Positions 425–439 (SKKPVKRRKKKRAAN) are enriched in basic residues.

Belongs to the RNase PH family. As to quaternary structure, component of the RNA exosome core complex (Exo-9), composed of EXOSC1, EXOSC2, EXOSC3, EXOSC4, EXOSC5, EXOSC6, EXOSC7, EXOSC8 and EXOSC9; within the complex interacts with EXOSC3, EXOSC4, EXOSC5 and DIS3. The catalytically inactive RNA exosome core complex (Exo-9) associates with the catalytic subunit EXOSC10/RRP6. Exo-9 may associate with DIS3 to form the nucleolar exosome complex, or DIS3L to form the cytoplasmic exosome complex. Exo-9 is formed by a hexameric base ring consisting of the heterodimers EXOSC4-EXOSC9, EXOSC5-EXOSC8 and EXOSC6-EXOSC7, and a cap ring consisting of EXOSC1, EXOSC2 and EXOSC3. The RNA exosome complex associates with cofactors C1D/RRP47, MPHOSPH6/MPP6 and MTREX/MTR4. Interacts (via C-terminus region) with SETX (via N-terminus domain); the interaction enhances SETX sumoylation. Interacts with DIS3; the interaction is direct.

It is found in the cytoplasm. Its subcellular location is the nucleus. It localises to the nucleolus. The protein resides in the nucleoplasm. Functionally, non-catalytic component of the RNA exosome complex which has 3'-&gt;5' exoribonuclease activity and participates in a multitude of cellular RNA processing and degradation events. In the nucleus, the RNA exosome complex is involved in proper maturation of stable RNA species such as rRNA, snRNA and snoRNA, in the elimination of RNA processing by-products and non-coding 'pervasive' transcripts, such as antisense RNA species and promoter-upstream transcripts (PROMPTs), and of mRNAs with processing defects, thereby limiting or excluding their export to the cytoplasm. The RNA exosome may be involved in Ig class switch recombination (CSR) and/or Ig variable region somatic hypermutation (SHM) by targeting AICDA deamination activity to transcribed dsDNA substrates. In the cytoplasm, the RNA exosome complex is involved in general mRNA turnover and specifically degrades inherently unstable mRNAs containing AU-rich elements (AREs) within their 3' untranslated regions, and in RNA surveillance pathways, preventing translation of aberrant mRNAs. It seems to be involved in degradation of histone mRNA. The catalytic inactive RNA exosome core complex of 9 subunits (Exo-9) is proposed to play a pivotal role in the binding and presentation of RNA for ribonucleolysis, and to serve as a scaffold for the association with catalytic subunits and accessory proteins or complexes. EXOSC9 binds to ARE-containing RNAs. The protein is Exosome complex component RRP45 (EXOSC9) of Homo sapiens (Human).